A 105-amino-acid chain; its full sequence is Pyrimidine/purine nucleoside phosphorylase (105 aa).

This sequence belongs to the nucleoside phosphorylase PpnP family.

It catalyses the reaction a purine D-ribonucleoside + phosphate = a purine nucleobase + alpha-D-ribose 1-phosphate. The catalysed reaction is adenosine + phosphate = alpha-D-ribose 1-phosphate + adenine. The enzyme catalyses cytidine + phosphate = cytosine + alpha-D-ribose 1-phosphate. It carries out the reaction guanosine + phosphate = alpha-D-ribose 1-phosphate + guanine. It catalyses the reaction inosine + phosphate = alpha-D-ribose 1-phosphate + hypoxanthine. The catalysed reaction is thymidine + phosphate = 2-deoxy-alpha-D-ribose 1-phosphate + thymine. The enzyme catalyses uridine + phosphate = alpha-D-ribose 1-phosphate + uracil. It carries out the reaction xanthosine + phosphate = alpha-D-ribose 1-phosphate + xanthine. Catalyzes the phosphorolysis of diverse nucleosides, yielding D-ribose 1-phosphate and the respective free bases. Can use uridine, adenosine, guanosine, cytidine, thymidine, inosine and xanthosine as substrates. Also catalyzes the reverse reactions. This Anaeromyxobacter sp. (strain Fw109-5) protein is Pyrimidine/purine nucleoside phosphorylase.